Consider the following 185-residue polypeptide: Cytidylate kinase (185 aa).

Glycine 8 to threonine 16 provides a ligand contact to ATP.

The protein belongs to the cytidylate kinase family. Type 2 subfamily.

It localises to the cytoplasm. The enzyme catalyses CMP + ATP = CDP + ADP. The catalysed reaction is dCMP + ATP = dCDP + ADP. This Desulfurococcus amylolyticus (strain DSM 18924 / JCM 16383 / VKM B-2413 / 1221n) (Desulfurococcus kamchatkensis) protein is Cytidylate kinase.